Consider the following 95-residue polypeptide: Large ribosomal subunit protein uL23 (95 aa).

The protein belongs to the universal ribosomal protein uL23 family. As to quaternary structure, part of the 50S ribosomal subunit. Contacts protein L29, and trigger factor when it is bound to the ribosome.

Functionally, one of the early assembly proteins it binds 23S rRNA. One of the proteins that surrounds the polypeptide exit tunnel on the outside of the ribosome. Forms the main docking site for trigger factor binding to the ribosome. The sequence is that of Large ribosomal subunit protein uL23 from Geobacillus thermodenitrificans (strain NG80-2).